Reading from the N-terminus, the 809-residue chain is ATP-dependent zinc metalloprotease FTSH 3, mitochondrial (809 aa).

The N-terminal 83 residues, 1 to 83 (MTMIFFSKLN…FANPRLRRFF (83 aa)), are a transit peptide targeting the mitochondrion. A compositionally biased stretch (basic and acidic residues) spans 93–121 (YENYFPKDKQEPKSDQKSEHKEGSEKNEN). Residues 93 to 122 (YENYFPKDKQEPKSDQKSEHKEGSEKNENE) are disordered. A helical membrane pass occupies residues 132–152 (FQNLLIPLLALAVFFSTFSFG). Residue 362 to 369 (GPPGTGKT) coordinates ATP. His-586 is a binding site for Zn(2+). Glu-587 is a catalytic residue. 2 residues coordinate Zn(2+): His-590 and Asp-662. The segment at 776-809 (GFEETEKDSAATPTVEPVVDDGAPPPFEPQVVPT) is disordered.

In the N-terminal section; belongs to the AAA ATPase family. It in the C-terminal section; belongs to the peptidase M41 family. Requires Zn(2+) as cofactor.

The protein localises to the mitochondrion inner membrane. Probable ATP-dependent zinc metallopeptidase. Involved in the assembly and/or stability of the complexes I and V of the mitochondrial oxidative phosphorylation system. The protein is ATP-dependent zinc metalloprotease FTSH 3, mitochondrial (FTSH3) of Arabidopsis thaliana (Mouse-ear cress).